The following is a 133-amino-acid chain: S-protein homolog 9 (133 aa).

A signal peptide spans 1 to 20; the sequence is MNRLSCFLLVIGLCIGLSNA.

This sequence belongs to the plant self-incompatibility (S1) protein family.

It is found in the secreted. This is S-protein homolog 9 from Arabidopsis thaliana (Mouse-ear cress).